We begin with the raw amino-acid sequence, 658 residues long: Threonine--tRNA ligase (658 aa).

The TGS domain occupies M1–T61. Residues D259–P554 form a catalytic region. Zn(2+) contacts are provided by C353, H404, and H531.

It belongs to the class-II aminoacyl-tRNA synthetase family. In terms of assembly, homodimer. It depends on Zn(2+) as a cofactor.

The protein localises to the cytoplasm. It carries out the reaction tRNA(Thr) + L-threonine + ATP = L-threonyl-tRNA(Thr) + AMP + diphosphate + H(+). Functionally, catalyzes the attachment of threonine to tRNA(Thr) in a two-step reaction: L-threonine is first activated by ATP to form Thr-AMP and then transferred to the acceptor end of tRNA(Thr). Also edits incorrectly charged L-seryl-tRNA(Thr). The protein is Threonine--tRNA ligase of Parafrankia sp. (strain EAN1pec).